The following is a 351-amino-acid chain: sn-glycerol-3-phosphate import ATP-binding protein UgpC (351 aa).

One can recognise an ABC transporter domain in the interval 4–235 (IVLDNVRKSY…PASTFVATFI (232 aa)). ATP is bound at residue 37-44 (GPSGCGKS).

It belongs to the ABC transporter superfamily. sn-glycerol-3-phosphate importer (TC 3.A.1.1.3) family. The complex is composed of two ATP-binding proteins (UgpC), two transmembrane proteins (UgpA and UgpE) and a solute-binding protein (UgpB).

It localises to the cell inner membrane. The catalysed reaction is sn-glycerol 3-phosphate(out) + ATP + H2O = sn-glycerol 3-phosphate(in) + ADP + phosphate + H(+). In terms of biological role, part of the ABC transporter complex UgpBAEC involved in sn-glycerol-3-phosphate (G3P) import. Responsible for energy coupling to the transport system. The protein is sn-glycerol-3-phosphate import ATP-binding protein UgpC of Brucella abortus (strain 2308).